Consider the following 668-residue polypeptide: SHC SH2 domain-binding protein 1 (668 aa).

Position 2 is an N-acetylalanine (A2). 3 positions are modified to phosphoserine: S31, S44, and S273. PbH1 repeat units follow at residues 428–451 (GMDV…LIIH), 452–473 (HGKT…TVRT), 474–496 (SAEL…EIYP), 497–518 (GSKC…LIKD), and 526–548 (IPKI…VLVK). S630 carries the post-translational modification Phosphoserine.

Interacts directly with isoform p52shc of SHC1 via its SH2 domain. Interacts with TRIM71; leading to enhanced SHCBP1 protein stability. Interacts with both members of the centralspindlin complex, KIF23 and RACGAP1. As to expression, expressed in spleen, lung and heart with higher expression in testis. No expression in brain, liver and skeletal muscle. Elevated expression in actively cycling cells.

The protein localises to the midbody. It localises to the cytoplasm. Its subcellular location is the cytoskeleton. The protein resides in the spindle. Functionally, may play a role in signaling pathways governing cellular proliferation, cell growth and differentiation. May be a component of a novel signaling pathway downstream of Shc. Acts as a positive regulator of FGF signaling in neural progenitor cells. This chain is SHC SH2 domain-binding protein 1 (Shcbp1), found in Mus musculus (Mouse).